A 325-amino-acid chain; its full sequence is Heme A synthase (325 aa).

The next 5 helical transmembrane spans lie at W6 to L26, L88 to G108, L116 to V136, L155 to I175, and L184 to A204. A heme-binding site is contributed by H246. 3 helical membrane passes run M248–D268, V275–F295, and I297–V317. Heme is bound at residue H305.

The protein belongs to the COX15/CtaA family. Type 2 subfamily. Interacts with CtaB. Requires heme b as cofactor.

It localises to the cell membrane. The catalysed reaction is Fe(II)-heme o + 2 A + H2O = Fe(II)-heme a + 2 AH2. It functions in the pathway porphyrin-containing compound metabolism; heme A biosynthesis; heme A from heme O: step 1/1. In terms of biological role, catalyzes the conversion of heme O to heme A by two successive hydroxylations of the methyl group at C8. The first hydroxylation forms heme I, the second hydroxylation results in an unstable dihydroxymethyl group, which spontaneously dehydrates, resulting in the formyl group of heme A. This Neorickettsia sennetsu (strain ATCC VR-367 / Miyayama) (Ehrlichia sennetsu) protein is Heme A synthase.